The sequence spans 385 residues: IGGIPAANAKCASHAGMTPAPHSSHPQAWGPLLQPPTVKTEPMDDGNFSKEQTSGFYSEGFHSASPSSSSKDSNGHSPRSSGSTREPSPFYDAMPLKAKANLGMHLDSFRNSLPYSLLTPPGFESRASDARDHSPSYESYSPRTLAPPAHVSHPLGRSDATPPKSPPRTPSSPERRSFDRFHDSGFDGVDHNKHDGDDGREGSGLEDDFDEEPGLRVPAVNSHGKVKTFKCKQCEFVAVTKLSFWEHSKEHIKPEKMLCCRKCPFVTEYKHHLEYHMRNHMGSKPFQCSQCSYSCVNKSMLNSHLKSHSNVYQYRCADCNYATKYCDSLKLHLRKYQHNPAMVLNLDGTPNPLPIIDVYGTRRGPKQKPLSKIFEQQTGTNNHSP.

Disordered stretches follow at residues 1–94 (IGGI…YDAM) and 124–216 (ESRA…PGLR). Low complexity predominate over residues 63-77 (SASPSSSSKDSNGHS). 2 stretches are compositionally biased toward basic and acidic residues: residues 126 to 135 (RASDARDHSP) and 173 to 203 (PERRSFDRFHDSGFDGVDHNKHDGDDGREGS). 4 C2H2-type zinc fingers span residues 229–251 (FKCKQCEFVAVTKLSFWEHSKEH), 258–280 (LCCRKCPFVTEYKHHLEYHMRNH), 286–308 (FQCSQCSYSCVNKSMLNSHLKSH), and 314–338 (YRCADCNYATKYCDSLKLHLRKYQH). The interval 361–385 (TRRGPKQKPLSKIFEQQTGTNNHSP) is disordered. The segment covering 374 to 385 (FEQQTGTNNHSP) has biased composition (polar residues).

Belongs to the hunchback C2H2-type zinc-finger protein family.

The protein localises to the nucleus. Gap class segmentation protein that controls development of head structures. This chain is Protein hunchback (hb), found in Bombyx mori (Silk moth).